The chain runs to 364 residues: Uroporphyrinogen decarboxylase (364 aa).

Coproporphyrinogen I is bound by residues R34, A36, R38, R47, D83, Y161, S216, and H336. Residues R34, A36, and R38 each contribute to the coproporphyrinogen III site. Residues D83, Y161, S216, and H336 each contribute to the coproporphyrinogen III site.

Belongs to the uroporphyrinogen decarboxylase family. Homodimer.

Its subcellular location is the cytoplasm. It localises to the cytosol. The catalysed reaction is uroporphyrinogen III + 4 H(+) = coproporphyrinogen III + 4 CO2. It carries out the reaction uroporphyrinogen I + 4 H(+) = coproporphyrinogen I + 4 CO2. It functions in the pathway porphyrin-containing compound metabolism; protoporphyrin-IX biosynthesis; coproporphyrinogen-III from 5-aminolevulinate: step 4/4. Its function is as follows. Catalyzes the sequential decarboxylation of the four acetate side chains of uroporphyrinogen to form coproporphyrinogen and participates in the fifth step in the heme biosynthetic pathway. Isomer I or isomer III of uroporphyrinogen may serve as substrate, but only coproporphyrinogen III can ultimately be converted to heme. In vitro also decarboxylates pentacarboxylate porphyrinogen I. This Rattus norvegicus (Rat) protein is Uroporphyrinogen decarboxylase.